Consider the following 122-residue polypeptide: Large ribosomal subunit protein eL18 (122 aa).

It belongs to the eukaryotic ribosomal protein eL18 family.

The chain is Large ribosomal subunit protein eL18 from Thermoplasma volcanium (strain ATCC 51530 / DSM 4299 / JCM 9571 / NBRC 15438 / GSS1).